The primary structure comprises 426 residues: Histidine--tRNA ligase (426 aa).

This sequence belongs to the class-II aminoacyl-tRNA synthetase family. Homodimer.

It is found in the cytoplasm. It catalyses the reaction tRNA(His) + L-histidine + ATP = L-histidyl-tRNA(His) + AMP + diphosphate + H(+). This Streptococcus pyogenes serotype M49 (strain NZ131) protein is Histidine--tRNA ligase.